A 255-amino-acid polypeptide reads, in one-letter code: MRIDGRENKQLRPVHMEKHFIKHAEGSVFITVGDTKVICTASIDDKVPPFMRGGGKGWITAEYAMLPRATEQRNVRESSKGKLSGRTMEIQRLIGRALRSVVNLDKLGEKTVWIDCDVIQADGGTRTASITGAYVAMVLAFAKLMEEKKLDELPVNDFLAATSVGIDPEHGIILDLNYAEDARAEVDMNIVMTGAGRFVEIQGTGEEATFSREQLNELLDTAEVGIRQLIDIQRKTLGELAMQIDIKRSEESGDT.

Residues R86 and 124-126 (GTR) contribute to the phosphate site.

The protein belongs to the RNase PH family. In terms of assembly, homohexameric ring arranged as a trimer of dimers.

It carries out the reaction tRNA(n+1) + phosphate = tRNA(n) + a ribonucleoside 5'-diphosphate. Phosphorolytic 3'-5' exoribonuclease that plays an important role in tRNA 3'-end maturation. Removes nucleotide residues following the 3'-CCA terminus of tRNAs; can also add nucleotides to the ends of RNA molecules by using nucleoside diphosphates as substrates, but this may not be physiologically important. Probably plays a role in initiation of 16S rRNA degradation (leading to ribosome degradation) during starvation. The polypeptide is Ribonuclease PH (Geobacillus sp. (strain WCH70)).